The primary structure comprises 211 residues: Protein U63 (211 aa).

This sequence belongs to the herpesviridae UL92 family.

This is Protein U63 (U63) from Human herpesvirus 7 (strain JI) (HHV-7).